The following is a 232-amino-acid chain: uncharacterized protein (232 aa).

Residues 1–32 form the signal peptide; that stretch reads MTTSKIATAFKTATFALAAGAVALGLASPADA.

This is an uncharacterized protein from Mycobacterium bovis (strain ATCC BAA-935 / AF2122/97).